Consider the following 904-residue polypeptide: Endoplasmic reticulum metallopeptidase 1 (904 aa).

At Met1 the chain carries N-acetylmethionine. Topologically, residues 1 to 63 (MEWGSESAAV…PGGSGGASRG (63 aa)) are cytoplasmic. The tract at residues 1–65 (MEWGSESAAV…GSGGASRGAG (65 aa)) is disordered. The span at 55–65 (GGSGGASRGAG) shows a compositional bias: gly residues. The helical transmembrane segment at 64-84 (AGTGLSEVRAALGLALYLIAL) threads the bilayer. The Lumenal segment spans residues 85 to 399 (RTLVQLSLQQ…AASKYRHGNM (315 aa)). A glycan (N-linked (GlcNAc...) asparagine) is linked at Asn182. Residues Cys204 and Cys222 are joined by a disulfide bond. Zn(2+) is bound by residues His205 and Asp217. Catalysis depends on Glu251, which acts as the Proton acceptor. The Zn(2+) site is built by Glu252, Glu278, and His354. Residues 400–420 (VFFDVLGLFVIAYPSRIGSII) form a helical membrane-spanning segment. Residues 421–457 (NYMVVMGVVLYLGKKFLQPKHKTGNYKKDFLCGLGIT) are Cytoplasmic-facing. The helical transmembrane segment at 458-478 (LISWFTSLVTVLIIAVFISLI) threads the bilayer. Topologically, residues 479–489 (GQSLSWYNHFY) are lumenal. Residues 490–510 (VSVCLYGTATVAKIILIHTLA) form a helical membrane-spanning segment. The Cytoplasmic segment spans residues 511–519 (KRFYYMNAS). Residues 520–540 (AQYLGEVFFDISLFVHCCFLV) traverse the membrane as a helical segment. Thr541 is a topological domain (lumenal). The helical transmembrane segment at 542–562 (LTYQGLCSAFISAVWVAFPLL) threads the bilayer. Topologically, residues 563-579 (TKLCVHKDFKQHGAQGK) are cytoplasmic. A helical membrane pass occupies residues 580–600 (FIAFYLLGMFIPYLYALYLIW). Topologically, residues 601–621 (AVFEMFTPILGRSGSEIPPDV) are lumenal. The chain crosses the membrane as a helical span at residues 622 to 642 (VLASILAGCTMILSSYFINFI). Over 643 to 651 (YLAKSTKKT) the chain is Cytoplasmic. Residues 652-672 (MLTLTLVCAITFLLVCSGTFF) form a helical membrane-spanning segment. Residues 673-904 (PYSSNPANPK…WVCTYDLFVF (232 aa)) lie on the Lumenal side of the membrane. A glycan (N-linked (GlcNAc...) asparagine) is linked at Asn730.

Belongs to the peptidase M28 family. The cofactor is Zn(2+).

The protein resides in the endoplasmic reticulum membrane. Functionally, within the ovary, required for the organization of somatic cells and oocytes into discrete follicular structures. In Homo sapiens (Human), this protein is Endoplasmic reticulum metallopeptidase 1.